The sequence spans 107 residues: Large ribosomal subunit protein uL24 (107 aa).

Belongs to the universal ribosomal protein uL24 family. In terms of assembly, part of the 50S ribosomal subunit.

One of two assembly initiator proteins, it binds directly to the 5'-end of the 23S rRNA, where it nucleates assembly of the 50S subunit. In terms of biological role, one of the proteins that surrounds the polypeptide exit tunnel on the outside of the subunit. The sequence is that of Large ribosomal subunit protein uL24 from Carboxydothermus hydrogenoformans (strain ATCC BAA-161 / DSM 6008 / Z-2901).